Consider the following 180-residue polypeptide: Cell number regulator 7 (180 aa).

A helical transmembrane segment spans residues 80–102 (AAAGAIYTLLACFTGFQCHWIYS).

This sequence belongs to the cornifelin family. As to expression, expressed in roots, leaves, immature ears and silks. Detected preferentially in silks.

It localises to the membrane. This Zea mays (Maize) protein is Cell number regulator 7 (CNR7).